A 189-amino-acid polypeptide reads, in one-letter code: ATP synthase subunit b (189 aa).

A helical transmembrane segment spans residues 23 to 43; that stretch reads IEIVLSLVVFGLLLFAVWKFV.

This sequence belongs to the ATPase B chain family. F-type ATPases have 2 components, F(1) - the catalytic core - and F(0) - the membrane proton channel. F(1) has five subunits: alpha(3), beta(3), gamma(1), delta(1), epsilon(1). F(0) has three main subunits: a(1), b(2) and c(10-14). The alpha and beta chains form an alternating ring which encloses part of the gamma chain. F(1) is attached to F(0) by a central stalk formed by the gamma and epsilon chains, while a peripheral stalk is formed by the delta and b chains.

It localises to the cell membrane. Functionally, f(1)F(0) ATP synthase produces ATP from ADP in the presence of a proton or sodium gradient. F-type ATPases consist of two structural domains, F(1) containing the extramembraneous catalytic core and F(0) containing the membrane proton channel, linked together by a central stalk and a peripheral stalk. During catalysis, ATP synthesis in the catalytic domain of F(1) is coupled via a rotary mechanism of the central stalk subunits to proton translocation. Its function is as follows. Component of the F(0) channel, it forms part of the peripheral stalk, linking F(1) to F(0). The chain is ATP synthase subunit b from Nocardioides sp. (strain ATCC BAA-499 / JS614).